Here is a 126-residue protein sequence, read N- to C-terminus: Aspartate 1-decarboxylase (126 aa).

Catalysis depends on serine 25, which acts as the Schiff-base intermediate with substrate; via pyruvic acid. Serine 25 is modified (pyruvic acid (Ser)). Residue threonine 57 coordinates substrate. Tyrosine 58 functions as the Proton donor in the catalytic mechanism. Position 73–75 (73–75 (GAA)) interacts with substrate.

Belongs to the PanD family. Heterooctamer of four alpha and four beta subunits. The cofactor is pyruvate. In terms of processing, is synthesized initially as an inactive proenzyme, which is activated by self-cleavage at a specific serine bond to produce a beta-subunit with a hydroxyl group at its C-terminus and an alpha-subunit with a pyruvoyl group at its N-terminus.

The protein resides in the cytoplasm. It carries out the reaction L-aspartate + H(+) = beta-alanine + CO2. It participates in cofactor biosynthesis; (R)-pantothenate biosynthesis; beta-alanine from L-aspartate: step 1/1. Its function is as follows. Catalyzes the pyruvoyl-dependent decarboxylation of aspartate to produce beta-alanine. The sequence is that of Aspartate 1-decarboxylase from Pseudomonas aeruginosa (strain LESB58).